The chain runs to 227 residues: MTKRAIVLLSGGLDSATVLAMARAQGFETYALSMRYGQRHSSELEAARRVAAALGATRHEIIDLDLRRFGGSALTDDALAVPTDGASDGIPVTYVPARNTIMLSLALGWAEAVGGRDLFFGANAVDYSGYPDCRPEYVAAYETLANLATKAGVEGDRFRVHAPIIDMTKGEIIRAGIALGVDYSLTVSCYQADDDGRACGVCDSCRIRRAGFEAAGVPDPTRYQAAA.

9-19 (LSGGLDSATVL) serves as a coordination point for ATP. Cysteine 189, cysteine 199, cysteine 202, and cysteine 205 together coordinate Zn(2+).

The protein belongs to the QueC family. Requires Zn(2+) as cofactor.

The enzyme catalyses 7-carboxy-7-deazaguanine + NH4(+) + ATP = 7-cyano-7-deazaguanine + ADP + phosphate + H2O + H(+). It participates in purine metabolism; 7-cyano-7-deazaguanine biosynthesis. Its function is as follows. Catalyzes the ATP-dependent conversion of 7-carboxy-7-deazaguanine (CDG) to 7-cyano-7-deazaguanine (preQ(0)). The sequence is that of 7-cyano-7-deazaguanine synthase from Cupriavidus necator (strain ATCC 17699 / DSM 428 / KCTC 22496 / NCIMB 10442 / H16 / Stanier 337) (Ralstonia eutropha).